Reading from the N-terminus, the 82-residue chain is Large ribosomal subunit protein uL29 (82 aa).

It belongs to the universal ribosomal protein uL29 family.

This Trichodesmium erythraeum (strain IMS101) protein is Large ribosomal subunit protein uL29.